Reading from the N-terminus, the 184-residue chain is Chromobox protein homolog hpl-1 (184 aa).

Residues 1–13 are compositionally biased toward polar residues; it reads MSRQNPVRSTRGN. 2 disordered regions span residues 1-27 and 87-115; these read MSRQ…QDAP and AAKR…STSD. The 59-residue stretch at 37 to 95 folds into the Chromo domain; sequence FVVEKVLNKRLTRGGSEYYIKWQGFPESECSWEPIENLQCDRMIQEYEKEAAKRTTRKR. Polar residues predominate over residues 99 to 115; that stretch reads PQPSTSSSAELQPSTSD.

In terms of assembly, interacts with histone demethylase spr-5. Interacts with chromobox protein homolog hpl-2. Interacts with histone H3 tails methylated at 'Lys-9' (H3K9me3) and 'Lys-23'(H3K23me2). Interacts with histone H1 variant his-24 (when monomethylated at 'Lys-14'); the interaction is direct. May interact with the REST corepressor rcor-1, histone deacetylase hda-1, and the histone demethylase lsd-1.

The protein resides in the nucleus. In terms of biological role, seems to be involved in transcriptional silencing in heterochromatin-like complexes. Involved in epigenetic repression. Probably does not act as global transcriptional repressor. Plays a role in linking epigenetic regulation with the innate immune response. Acting in concert with chromobox protein homolog hpl-2 and histone H1 protein his-24, involved in reproduction, somatic gonad development, male tail development and vulval cell fate decisions; perhaps as a result of modulating expression of Hox genes mab-5 and egl-5. Role in growth and somatic gonad development is antagonized by histone-lysine N-methyltransferase set-2/SET1. Required for larval development, acting redundantly with hpl-2. Plays a role in the formation of the vulva and in fertility, acting together with a CoREST-like complex, and hpl-2. This chain is Chromobox protein homolog hpl-1, found in Caenorhabditis elegans.